The sequence spans 86 residues: RNA-binding protein Hfq (86 aa).

Residues 9-68 (DPYLNTLRKEKVPVSIYLVNGIKLQGQIESFDQFVVLLKNTVSQMVYKHAISTVVPARPV) form the Sm domain. Residues 66–86 (RPVRLPSPSDAEHGDSEPGNA) form a disordered region. The segment covering 75-86 (DAEHGDSEPGNA) has biased composition (basic and acidic residues).

The protein belongs to the Hfq family. As to quaternary structure, homohexamer.

RNA chaperone that binds small regulatory RNA (sRNAs) and mRNAs to facilitate mRNA translational regulation in response to envelope stress, environmental stress and changes in metabolite concentrations. Also binds with high specificity to tRNAs. The polypeptide is RNA-binding protein Hfq (Pseudomonas entomophila (strain L48)).